The sequence spans 144 residues: D-aminoacyl-tRNA deacylase (144 aa).

Residues 136–137 (GP) carry the Gly-cisPro motif, important for rejection of L-amino acids motif.

Belongs to the DTD family. As to quaternary structure, homodimer.

The protein localises to the cytoplasm. The catalysed reaction is glycyl-tRNA(Ala) + H2O = tRNA(Ala) + glycine + H(+). It carries out the reaction a D-aminoacyl-tRNA + H2O = a tRNA + a D-alpha-amino acid + H(+). Functionally, an aminoacyl-tRNA editing enzyme that deacylates mischarged D-aminoacyl-tRNAs. Also deacylates mischarged glycyl-tRNA(Ala), protecting cells against glycine mischarging by AlaRS. Acts via tRNA-based rather than protein-based catalysis; rejects L-amino acids rather than detecting D-amino acids in the active site. By recycling D-aminoacyl-tRNA to D-amino acids and free tRNA molecules, this enzyme counteracts the toxicity associated with the formation of D-aminoacyl-tRNA entities in vivo and helps enforce protein L-homochirality. This chain is D-aminoacyl-tRNA deacylase, found in Vibrio atlanticus (strain LGP32) (Vibrio splendidus (strain Mel32)).